The chain runs to 356 residues: Nitrilase, arylacetone-specific (356 aa).

The region spanning 7-280 (VRAAAVQAAS…EGLIIADLNM (274 aa)) is the CN hydrolase domain. Catalysis depends on Glu47, which acts as the Proton acceptor. Lys129 acts as the Proton donor in catalysis. The active-site Nucleophile is Cys163. The tract at residues 324 to 356 (QEEAPEPHVQSTAAPVAVSQTQDSDTLLVQEPS) is disordered. Positions 332–356 (VQSTAAPVAVSQTQDSDTLLVQEPS) are enriched in polar residues.

Belongs to the carbon-nitrogen hydrolase superfamily. Nitrilase family. In terms of assembly, homohexamer.

The enzyme catalyses a nitrile + 2 H2O = a carboxylate + NH4(+). Nitrilase that acts mostly on arylacetonitriles. This chain is Nitrilase, arylacetone-specific, found in Alcaligenes faecalis.